A 35-amino-acid chain; its full sequence is Fatty acid synthase (35 aa).

Residue serine 12 is part of the active site.

In terms of assembly, homodimer which is arranged in a head to tail fashion. Interacts with CEACAM1; this interaction is insulin and phosphorylation-dependent; reduces fatty-acid synthase activity.

It is found in the cytoplasm. The protein resides in the melanosome. The catalysed reaction is acetyl-CoA + n malonyl-CoA + 2n NADPH + 2n H(+) = a long-chain fatty acid + (n+1) CoA + n CO2 + 2n NADP(+).. Its function is as follows. Fatty acid synthetase catalyzes the formation of long-chain fatty acids from acetyl-CoA, malonyl-CoA and NADPH. This multifunctional protein has 7 catalytic activities as an acyl carrier protein. Functionally, this fragment is from the acyltransferase domain of the fatty acid synthetase. The chain is Fatty acid synthase (FASN) from Capra hircus (Goat).